Reading from the N-terminus, the 366-residue chain is Protein RecA (366 aa).

Glycine 77–threonine 84 lines the ATP pocket. The disordered stretch occupies residues isoleucine 346–alanine 366.

Belongs to the RecA family.

Its subcellular location is the cytoplasm. Functionally, can catalyze the hydrolysis of ATP in the presence of single-stranded DNA, the ATP-dependent uptake of single-stranded DNA by duplex DNA, and the ATP-dependent hybridization of homologous single-stranded DNAs. It interacts with LexA causing its activation and leading to its autocatalytic cleavage. This chain is Protein RecA, found in Rhodospirillum rubrum (strain ATCC 11170 / ATH 1.1.1 / DSM 467 / LMG 4362 / NCIMB 8255 / S1).